We begin with the raw amino-acid sequence, 376 residues long: Queuine tRNA-ribosyltransferase (376 aa).

Catalysis depends on aspartate 90, which acts as the Proton acceptor. Residues 90–94 (DSGGF), aspartate 144, glutamine 193, and glycine 220 each bind substrate. The interval 251–257 (GVGTPED) is RNA binding. Aspartate 270 functions as the Nucleophile in the catalytic mechanism. An RNA binding; important for wobble base 34 recognition region spans residues 275–279 (TRNAR). Zn(2+) is bound by residues cysteine 308, cysteine 310, cysteine 313, and histidine 339.

Belongs to the queuine tRNA-ribosyltransferase family. As to quaternary structure, homodimer. Within each dimer, one monomer is responsible for RNA recognition and catalysis, while the other monomer binds to the replacement base PreQ1. Requires Zn(2+) as cofactor.

The enzyme catalyses 7-aminomethyl-7-carbaguanine + guanosine(34) in tRNA = 7-aminomethyl-7-carbaguanosine(34) in tRNA + guanine. It participates in tRNA modification; tRNA-queuosine biosynthesis. Functionally, catalyzes the base-exchange of a guanine (G) residue with the queuine precursor 7-aminomethyl-7-deazaguanine (PreQ1) at position 34 (anticodon wobble position) in tRNAs with GU(N) anticodons (tRNA-Asp, -Asn, -His and -Tyr). Catalysis occurs through a double-displacement mechanism. The nucleophile active site attacks the C1' of nucleotide 34 to detach the guanine base from the RNA, forming a covalent enzyme-RNA intermediate. The proton acceptor active site deprotonates the incoming PreQ1, allowing a nucleophilic attack on the C1' of the ribose to form the product. After dissociation, two additional enzymatic reactions on the tRNA convert PreQ1 to queuine (Q), resulting in the hypermodified nucleoside queuosine (7-(((4,5-cis-dihydroxy-2-cyclopenten-1-yl)amino)methyl)-7-deazaguanosine). The chain is Queuine tRNA-ribosyltransferase from Cupriavidus pinatubonensis (strain JMP 134 / LMG 1197) (Cupriavidus necator (strain JMP 134)).